The sequence spans 287 residues: Diaminopimelate epimerase (287 aa).

Residues Asn13, Gln46, and Asn66 each coordinate substrate. The active-site Proton donor is Cys75. Substrate contacts are provided by residues 76–77, Asn166, Asn199, and 217–218; these read GN and ER. Cys226 (proton acceptor) is an active-site residue. 227 to 228 lines the substrate pocket; the sequence is GT.

It belongs to the diaminopimelate epimerase family. As to quaternary structure, homodimer.

The protein resides in the cytoplasm. The enzyme catalyses (2S,6S)-2,6-diaminopimelate = meso-2,6-diaminopimelate. The protein operates within amino-acid biosynthesis; L-lysine biosynthesis via DAP pathway; DL-2,6-diaminopimelate from LL-2,6-diaminopimelate: step 1/1. Functionally, catalyzes the stereoinversion of LL-2,6-diaminopimelate (L,L-DAP) to meso-diaminopimelate (meso-DAP), a precursor of L-lysine and an essential component of the bacterial peptidoglycan. The polypeptide is Diaminopimelate epimerase (Paraburkholderia xenovorans (strain LB400)).